The chain runs to 645 residues: Protein LHY (645 aa).

Ser-6 is modified (phosphoserine). The HTH myb-type domain maps to 19 to 73; that stretch reads TITKQRERWTEDEHERFLEALRLYGRAWQRIEEHIGTKTAVQIRSHAQKFFTKLE. The segment at residues 46 to 69 is a DNA-binding region (H-T-H motif); it reads WQRIEEHIGTKTAVQIRSHAQKFF. 4 disordered regions span residues 89-127, 149-212, 410-437, and 458-500; these read IEIP…AKLV, EKTS…GTTV, QNLA…ADSK, and AQKK…TDEN. Residues 110–120 are compositionally biased toward polar residues; sequence NNGTSSSQVSS. Over residues 149–158 the composition is skewed to basic and acidic residues; it reads EKTSTGKENQ. The span at 159-169 shows a compositional bias: polar residues; that stretch reads DENCSGVSTVN. Over residues 197–207 the composition is skewed to basic and acidic residues; sequence VPKKNKDKDGN. The segment covering 468-478 has biased composition (polar residues); that stretch reads SCGSNTPSGSD. Residues 483 to 498 are compositionally biased toward basic and acidic residues; that stretch reads ALDKMEKDKEDVKETD.

As to quaternary structure, homodimer or heterodimer with CCA1. Interacts with CCA1 (via internal domain); independently of photoperiod. Functions probably as part of a large complex. Interacts with CKB1 and CKB3. Interacts with LNK1 and LNK2. Post-translationally, phosphorylated by CK2. Expressed in leaves, roots, stems, flowers and siliques.

The protein resides in the nucleus. Transcription factor involved in the circadian clock. Binds to the promoter region of APRR1/TOC1 and TCP21/CHE to repress their transcription. Represses both CCA1 and itself. May recognize the promoter of JMJ14 to regulates its expression during the night in a circadian manner. In Arabidopsis thaliana (Mouse-ear cress), this protein is Protein LHY.